A 2153-amino-acid chain; its full sequence is RNA-directed RNA polymerase L (2153 aa).

Positions 36, 54, 97, 110, and 111 each coordinate Mn(2+). Lys-124 (for endonuclease activity) is an active-site residue. One can recognise a RdRp catalytic domain in the interval 957-1143; the sequence is TGNVIKFKRR…AVNQEMWKSM (187 aa). Position 1100 (Asp-1100) interacts with Mg(2+). The interaction with the viral nucleoprotein stretch occupies residues 1291–2153; that stretch reads KQAFYSYKHT…FPHDPVSSFY (863 aa).

Belongs to the Bunyavirales RNA polymerase family. In terms of assembly, interacts with the viral nucleoprotein; this interaction is required for RdRp function. Requires Mn(2+) as cofactor. Mg(2+) is required as a cofactor.

The protein resides in the host cytoplasm. It is found in the host perinuclear region. It catalyses the reaction RNA(n) + a ribonucleoside 5'-triphosphate = RNA(n+1) + diphosphate. RNA-dependent RNA polymerase, which is responsible for the replication and transcription of the viral RNA genome using antigenomic RNA as an intermediate. During transcription, synthesizes subgenomic RNAs and assures their capping by a cap-snatching mechanism, which involves the endonuclease activity cleaving the host capped pre-mRNAs. These short capped RNAs are then used as primers for viral transcription. Cleaves ssRNA substrates but not DNA. Seems to downregulate the expression of its own and heterologous mRNAs through its endonuclease activity. The chain is RNA-directed RNA polymerase L from Sin Nombre orthohantavirus (SNV).